The chain runs to 485 residues: Probable glycine dehydrogenase (decarboxylating) subunit 2 (485 aa).

Residue K269 is modified to N6-(pyridoxal phosphate)lysine.

The protein belongs to the GcvP family. C-terminal subunit subfamily. The glycine cleavage system is composed of four proteins: P, T, L and H. In this organism, the P 'protein' is a heterodimer of two subunits. Pyridoxal 5'-phosphate is required as a cofactor.

The catalysed reaction is N(6)-[(R)-lipoyl]-L-lysyl-[glycine-cleavage complex H protein] + glycine + H(+) = N(6)-[(R)-S(8)-aminomethyldihydrolipoyl]-L-lysyl-[glycine-cleavage complex H protein] + CO2. Functionally, the glycine cleavage system catalyzes the degradation of glycine. The P protein binds the alpha-amino group of glycine through its pyridoxal phosphate cofactor; CO(2) is released and the remaining methylamine moiety is then transferred to the lipoamide cofactor of the H protein. The chain is Probable glycine dehydrogenase (decarboxylating) subunit 2 from Chlorobium phaeovibrioides (strain DSM 265 / 1930) (Prosthecochloris vibrioformis (strain DSM 265)).